A 331-amino-acid polypeptide reads, in one-letter code: Aldo-keto reductase family 7 member A3 (331 aa).

At Ser6 the chain carries Phosphoserine. The NADPH site is built by Met17, Asp44, and Tyr49. Tyr49 acts as the Proton donor in catalysis. Ser85 is subject to Phosphoserine. NADPH contacts are provided by His113, Ser143, Asn144, Asn198, Leu200, Gly202, Lys208, Tyr209, and Arg222. Thr227 is subject to Phosphothreonine. Residues Ser290, Gln294, and Asn298 each coordinate NADPH.

It belongs to the aldo/keto reductase family. Aldo/keto reductase 2 subfamily. In terms of assembly, homodimer. In terms of tissue distribution, expressed in colon, kidney, liver, pancreas, adenocarcinoma and endometrium.

The protein localises to the cytoplasm. The enzyme catalyses a primary alcohol + NADP(+) = an aldehyde + NADPH + H(+). The catalysed reaction is aflatoxin B1 dialdehyde + NADPH + H(+) = aflatoxin B1 C(6a)-monoaldehyde + NADP(+). It carries out the reaction aflatoxin B1 dialdehyde + NADPH + H(+) = aflatoxin B1 C(8)-monoaldehyde + NADP(+). It catalyses the reaction aflatoxin B1 C(6a)-monoaldehyde + NADPH + 2 H(+) = aflatoxin B1 triol + NADP(+). Its activity is regulated as follows. Inhibited by citrate. Catalyzes the NADPH-dependent reduction of various carbonyl-containing compounds, including aldehydes, ketones, and toxic products from cellular metabolism or environmental exposure. Can reduce the dialdehyde form of aflatoxin B1 (AFB1) into alcohol derivatives, via monoaldehydes intermediates. Can reduce the dialdehyde form of aflatoxin B1 (AFB1) into alcohol derivatives, via monoaldehydes intermediates, thus preventing the formation of protein adducts that contribute to AFB1-induced toxicity. The sequence is that of Aldo-keto reductase family 7 member A3 from Homo sapiens (Human).